Reading from the N-terminus, the 238-residue chain is Orotidine 5'-phosphate decarboxylase (238 aa).

Substrate contacts are provided by residues aspartate 10, lysine 32, 59–68, threonine 122, arginine 184, glutamine 193, glycine 213, and arginine 214; that span reads DLKLHDIPNT. Lysine 61 acts as the Proton donor in catalysis.

This sequence belongs to the OMP decarboxylase family. Type 1 subfamily. In terms of assembly, homodimer.

It catalyses the reaction orotidine 5'-phosphate + H(+) = UMP + CO2. The protein operates within pyrimidine metabolism; UMP biosynthesis via de novo pathway; UMP from orotate: step 2/2. Its function is as follows. Catalyzes the decarboxylation of orotidine 5'-monophosphate (OMP) to uridine 5'-monophosphate (UMP). This Bacillus thuringiensis subsp. konkukian (strain 97-27) protein is Orotidine 5'-phosphate decarboxylase.